We begin with the raw amino-acid sequence, 127 residues long: Putative B3 domain-containing protein At4g12617 (127 aa).

A DNA-binding region (TF-B3) is located at residues 35–127 (IMMPKTLLEA…HTRLNFKHVA (93 aa)).

The protein resides in the nucleus. In Arabidopsis thaliana (Mouse-ear cress), this protein is Putative B3 domain-containing protein At4g12617.